A 184-amino-acid polypeptide reads, in one-letter code: UPF0301 protein RSKD131_2391 (184 aa).

It belongs to the UPF0301 (AlgH) family.

The polypeptide is UPF0301 protein RSKD131_2391 (Cereibacter sphaeroides (strain KD131 / KCTC 12085) (Rhodobacter sphaeroides)).